Here is a 267-residue protein sequence, read N- to C-terminus: Transcription factor HES-1-A (267 aa).

The tract at residues 1–43 (MPADVMEKNSSSPVAATPASVSNTPDKPKTASEHRKSSKPIME) is disordered. Residues 10–22 (SSSPVAATPASVS) show a composition bias toward low complexity. A compositionally biased stretch (basic and acidic residues) spans 26–35 (DKPKTASEHR). The bHLH domain maps to 34–91 (HRKSSKPIMEKRRRARINESLGQLKTLILDALKKDSSRHSKLEKADILEMTVKHLRNL). An Orange domain is found at 110 to 143 (YRAGFSECMNEVTRFLSTCEGVNTDVRTRLLGHL). A WRPW motif motif is present at residues 264 to 267 (WRPW).

Transcription repression requires formation of a complex with a corepressor protein of the Groucho/TLE family. Interacts with the bHLH protein hes2, and binds DNA in the form of a heterodimer with the bHLH protein hey1/hrt1. Interacts with the bHLH protein hes6; this interaction may inhibit the transcriptional repressor activity. Starting from late neurula stage, weakly expressed in midline neural cells, where expression is restricted to the superficial layer of the prospective floorplate. Expressed in the posterior somitic mesoderm (PSM) at tailbud stage. During early tailbud stages, broadly expressed within the pronephric mesoderm both around and inside the developing pronephros. During late tailbud to early tadpole stages, expressed more ventrally in the pronephros, and although initially expressed in both the lateral and medial layers, by these later stages expression is predominantly in the lateral layer. Pronephric expression is no longer detectable in late tadpoles (stage 35).

Its subcellular location is the nucleus. Its function is as follows. Transcriptional repressor of a subset of early mesodermal genes including myod1 and t/bra. Binds DNA on N-box motifs: 5'-CACNAG-3'. Acts as a negative regulator of myogenesis, mediating Notch signaling to repress expression of myod1. This chain is Transcription factor HES-1-A (hes1-a), found in Xenopus laevis (African clawed frog).